The chain runs to 411 residues: Histidine--tRNA ligase (411 aa).

The protein belongs to the class-II aminoacyl-tRNA synthetase family. As to quaternary structure, homodimer.

It localises to the cytoplasm. It catalyses the reaction tRNA(His) + L-histidine + ATP = L-histidyl-tRNA(His) + AMP + diphosphate + H(+). In Dictyoglomus turgidum (strain DSM 6724 / Z-1310), this protein is Histidine--tRNA ligase.